We begin with the raw amino-acid sequence, 607 residues long: MDRSKDARKRSISLACTVCRKRKLKCDGNKPCGRCIRLNTPKECIYNIDKRKDKRKIKNGSKVFLFKNNTIDNGNNSILENKGLNEDLSSHIYEKEAPKFDSDIDISRFGTNDAVIFNNDGWDTSLPIDFDFDEFNTETTDFDDFLKLLGDNSPSKEQKSLSYSPTATGLSGVVKETESEDNAPTRSRLIDVLFENKLHSVPGISKWHLYELESQYPNLECTEGNSDEKFLLSTVLCLGSLTIRKRELLNHSNIDNRPLLPENSISKLTTDAFKYYNAAKTLVPDLLSHPTIDGFCGLVLMANFMTMMISLEHQLYLSINALQLAVALNLNNNTKCKELLESNSDGIGVILLFWNIWCSSCMLATIHGKNPFITLEQITTPLPCEISPRNKTNKLLIDFMQIRIKLATLQSKIFQRLYTSSTANEVPFVNLEREFEEVSLQITRLKGFPIFEEHLFYRSRVLMLELSCLRAQASFLLYRPYLITGESLQAVTMAKSIIHEIWSQYTKQFPDNEKERHERLDWNFCYPLRTASLTLCISCIILLRYKQVVQFLKGTELFEYILALEILQDLVQVLPIEQNLIDIIKYPISPVQLSGDSFVEFWGRILY.

The segment at residues 16 to 44 is a DNA-binding region (zn(2)-C6 fungal-type); sequence CTVCRKRKLKCDGNKPCGRCIRLNTPKEC.

Its subcellular location is the nucleus. This is an uncharacterized protein from Saccharomyces cerevisiae (strain ATCC 204508 / S288c) (Baker's yeast).